Here is a 284-residue protein sequence, read N- to C-terminus: MSKFEAFLRPTQTYHSRTYDRISKHHNFNGTGKTILVTGGSSGVGYSICQAFAEADVARIAIVSRSPGPQAAAKAALEAAHPAVQIVTYAASITDHARMAAILAELGPVDVLVLCAAVVHRQVPATAITAAEMQAAFDVNVLAPFHLVQAYLATTTAGTKTVIHVSSAAAQSRSPFRAGYGPSKAAATQVMQHFAAERASPALRVFSFHPGAFYTPSVAEHYAPDSTGWEDINLPAHFARWLAGPESGFLNGRYLWAHWDVDELIALRDRVERDSSFLTIGLVV.

Val-37 contacts NADP(+). Catalysis depends on proton donor residues Ser-166 and Tyr-180. Tyr-180, Lys-184, and Thr-215 together coordinate NADP(+). The active-site Lowers pKa of active site Tyr is Lys-184.

This sequence belongs to the short-chain dehydrogenases/reductases (SDR) family.

It functions in the pathway secondary metabolite biosynthesis. Functionally, short chain dehydrogenase/reductase; part of the gene cluster that mediates the biosynthesis of the tetrahydroxanthone dimer secalonic acid D. The pathway begins with the synthesis of atrochrysone thioester by the polyketide synthase AacuL. The atrochrysone carboxyl ACP thioesterase AacuM then breaks the thioester bond and releases the atrochrysone carboxylic acid from AacuL. Atrochrysone carboxylic acid is decarboxylated by the decarboxylase AacuI, and oxidized by the anthrone oxygenase AacuG to yield emodin. Emodin is then reduced to emodin hydroquinone by a yet unidentified oxidoreductase. A-ring reduction by the short chain dehydrogenase AacuN, dehydration by the scytalone dehydratase-like protein AacuK and probable spontaneous re-oxidation, results in overall deoxygenation to chrysophanol. Baeyer-Villiger oxidation by the Baeyer-Villiger monooxygenase (BVMO) AacuH then yields monodictyphenone. Monodictyphenone is transformed into compounds with the tetrahydroxanthone skeleton via methylesterification by the methyltransferase AacuQ, followed by the action of the flavin-dependent monooxygenase AacuC, the isomerase AacuP, and the short chain dehydrogenase/reductase AacuF or AacuD. AacuF and AacuD should accept the same compound as a substrate but perform the ketoreduction with a different stereoselectivity, thus yielding blennolides B and A, respectively. In the final step of the biosynthesis, the cytochrome P450 monooxygenase AacuE accepts blennolide B and/or blennolide A to conduct the dimerization reaction to furnish the tetrahydroxanthone dimers, secalonic acids D, B, and F. The protein is Short chain dehydrogenase/reductase AacuD of Aspergillus aculeatus (strain ATCC 16872 / CBS 172.66 / WB 5094).